The chain runs to 313 residues: MSGIDPKRFGKVAVLFGGESAEREVSLTSGRLVLQGLRDAGVDAHPFDPAERPLSALKDEGFVRAFNALHGGYGENGQIQGALDFYGIRYTGSGVLGSALGLDKFRTKLVWQQTGVPTPPFETVMRGDDLAARATDIVAKLGLPLFVKPASEGSSVAVLKVKTADALPAALEEAATHDKIVIVEKSIEGGGEYTACIAGDLDLPLIKIVPAGEFYDYHAKYVADDTQYLIPCGLPAQQEAELKRIARRAFDVLGCTDWGRADFMLDAAGNAYFLEVNTAPGMTDHSLPPKAARAVGISYSELVVKVLSLTLND.

Positions 108–308 (KLVWQQTGVP…YSELVVKVLS (201 aa)) constitute an ATP-grasp domain. 138–193 (VAKLGLPLFVKPASEGSSVAVLKVKTADALPAALEEAATHDKIVIVEKSIEGGGEY) is a binding site for ATP. D262, E275, and N277 together coordinate Mg(2+).

It belongs to the D-alanine--D-alanine ligase family. Requires Mg(2+) as cofactor. Mn(2+) serves as cofactor.

It localises to the cytoplasm. It carries out the reaction 2 D-alanine + ATP = D-alanyl-D-alanine + ADP + phosphate + H(+). It functions in the pathway cell wall biogenesis; peptidoglycan biosynthesis. In terms of biological role, cell wall formation. The protein is D-alanine--D-alanine ligase of Burkholderia cenocepacia (strain ATCC BAA-245 / DSM 16553 / LMG 16656 / NCTC 13227 / J2315 / CF5610) (Burkholderia cepacia (strain J2315)).